The sequence spans 329 residues: PDZ and LIM domain protein 1 (329 aa).

Residue Thr2 is modified to N-acetylthreonine. The region spanning 3 to 85 is the PDZ domain; the sequence is TQQIDLQGPG…NLTLTVARSE (83 aa). 2 positions are modified to phosphoserine: Ser90 and Ser130. The residue at position 144 (Tyr144) is a Phosphotyrosine. Residues 258-317 enclose the LIM zinc-binding domain; it reads PMCDKCGTGIVGVFVKLRDRHRHPECYVCTDCGTNLKQKGHFFVEDQIYCEKHARERVTP. The Zn(2+) site is built by Cys260, Cys263, His280, Cys283, Cys286, Cys289, Cys307, and His310. Position 316 is a phosphothreonine (Thr316). A Phosphotyrosine modification is found at Tyr321.

In terms of assembly, interacts with ACTN1, ACTN2 and ACTN4. Interacts with PDLIM4. In terms of tissue distribution, strongly expressed in the heart and skeletal muscle, moderately expressed in the spleen, small intestine, colon, placenta, and lung. A lower level expression is seen in liver, thymus, kidney, prostate and pancreas and is not found in the brain, testis, ovary, and peripheral blood leukocytes.

The protein localises to the cytoplasm. The protein resides in the cytoskeleton. It localises to the myofibril. It is found in the sarcomere. Its subcellular location is the z line. Its function is as follows. Cytoskeletal protein that may act as an adapter that brings other proteins (like kinases) to the cytoskeleton. Involved in assembly, disassembly and directioning of stress fibers in fibroblasts. Required for the localization of ACTN1 and PALLD to stress fibers. Required for cell migration and in maintaining cell polarity of fibroblasts. The polypeptide is PDZ and LIM domain protein 1 (PDLIM1) (Homo sapiens (Human)).